Consider the following 282-residue polypeptide: MPDRYAVMGNPIAHSKSPQIHTAFAQQTGQALTYTGLQVEAGKLAEAITAFQQQEGKGLNITIPLKAEAWRLVDQCSPQAQRAKAVNTILLEKNGALLGDNTDGVGLVRDLINNHGGRITGQQVLLLGAGGAASGVIEALLKEHPSHLIIVNRTPAKAIELAARFSPFGAITGGGYELLENNSFHLIINATASSLQGELPPLPRGILRSGGWVYDMMYGNEPTIFMKWGQTHGAARSLDGLGMLVEQAAEAFFIWRKVRPKSAPIIAQLRREMDIKNPAMPL.

Shikimate is bound by residues 15-17 (SKS) and T62. K66 serves as the catalytic Proton acceptor. The shikimate site is built by N87 and D103. NADP(+)-binding positions include 128–132 (GAGGA), 152–157 (NRTPAK), and M216. Y218 is a shikimate binding site. G240 is a binding site for NADP(+).

The protein belongs to the shikimate dehydrogenase family. Homodimer.

The enzyme catalyses shikimate + NADP(+) = 3-dehydroshikimate + NADPH + H(+). Its pathway is metabolic intermediate biosynthesis; chorismate biosynthesis; chorismate from D-erythrose 4-phosphate and phosphoenolpyruvate: step 4/7. In terms of biological role, involved in the biosynthesis of the chorismate, which leads to the biosynthesis of aromatic amino acids. Catalyzes the reversible NADPH linked reduction of 3-dehydroshikimate (DHSA) to yield shikimate (SA). This Nitrosococcus oceani (strain ATCC 19707 / BCRC 17464 / JCM 30415 / NCIMB 11848 / C-107) protein is Shikimate dehydrogenase (NADP(+)).